Here is a 156-residue protein sequence, read N- to C-terminus: ATP synthase subunit b (156 aa).

A helical transmembrane segment spans residues 7–29 (LIGQLIAFALFTWFCVKFVWPPI).

Belongs to the ATPase B chain family. As to quaternary structure, F-type ATPases have 2 components, F(1) - the catalytic core - and F(0) - the membrane proton channel. F(1) has five subunits: alpha(3), beta(3), gamma(1), delta(1), epsilon(1). F(0) has three main subunits: a(1), b(2) and c(10-14). The alpha and beta chains form an alternating ring which encloses part of the gamma chain. F(1) is attached to F(0) by a central stalk formed by the gamma and epsilon chains, while a peripheral stalk is formed by the delta and b chains.

The protein resides in the cell inner membrane. Its function is as follows. F(1)F(0) ATP synthase produces ATP from ADP in the presence of a proton or sodium gradient. F-type ATPases consist of two structural domains, F(1) containing the extramembraneous catalytic core and F(0) containing the membrane proton channel, linked together by a central stalk and a peripheral stalk. During catalysis, ATP synthesis in the catalytic domain of F(1) is coupled via a rotary mechanism of the central stalk subunits to proton translocation. In terms of biological role, component of the F(0) channel, it forms part of the peripheral stalk, linking F(1) to F(0). The chain is ATP synthase subunit b from Actinobacillus succinogenes (strain ATCC 55618 / DSM 22257 / CCUG 43843 / 130Z).